The chain runs to 639 residues: MRYSKNFDVIVVGGGHAGTEAALASARMGCDTLLITHSIENLGAMSCNPSIGGIGKGHLVKEIDAMGGAMAAATDEAGIQFRILNSSKGPAVRATRAQGDRVLYKAAIRRRLENQPNLSLFQAAVDDLLVKGDEVQGVVTQMGLEFMAKKVVLTAGTFLDGKIHVGLNNYAGGRAGDPAAVSLSARLKELKLPQGRLKTGTPPRIDGRTIDFSVMLEQPGDLDPVPVFSYLGRPEQHPKQVPCWISHTNEQTHDIIRGGLDRSPMYTGVIEGVGPRYCPSIEDKIHRFASRNSHQIFLEPEGLTTNEFYPNGISTSLPFDVQWELVRSIRGLESAVIVRPGYAIEYDFFDPRHLRHSLETKAIGGLYFAGQINGTTGYEEAAAQGMLAGINAGLAAQGKEAWLPKRSESYIGVLVDDLITRGVQEPYRMFTSRAEYRLSLREDNADMRLTAIGRDLGLVDDYRWEVFCRKQEAVSRETSRLKDIWVGPKHEIAPLVTQLLGQELSHECNLTELLRRPGITYEAITALGNRIWAPESLDDDLGLAAQISDQVEISVKYQGYIERQAVEIARQEHNETFPLPEGLDYSQVLGLSKEVQQKLNLHKPETLGQAGRISGVTPAALSLLLVHLKKGLGRTQETI.

An FAD-binding site is contributed by 13–18 (GGGHAG). Residue 274 to 288 (GPRYCPSIEDKIHRF) coordinates NAD(+).

The protein belongs to the MnmG family. In terms of assembly, homodimer. Heterotetramer of two MnmE and two MnmG subunits. FAD is required as a cofactor.

It is found in the cytoplasm. NAD-binding protein involved in the addition of a carboxymethylaminomethyl (cmnm) group at the wobble position (U34) of certain tRNAs, forming tRNA-cmnm(5)s(2)U34. The polypeptide is tRNA uridine 5-carboxymethylaminomethyl modification enzyme MnmG (Polynucleobacter asymbioticus (strain DSM 18221 / CIP 109841 / QLW-P1DMWA-1) (Polynucleobacter necessarius subsp. asymbioticus)).